The following is a 615-amino-acid chain: Probable ATP-citrate synthase subunit 1 (615 aa).

ATP-binding positions include 221-241 and 272-298; these read LIRFEADPACKLMVLLGEVGG and FKTEVQFGHAGSFANSELETAVAKNQA. Glutamate 238 contributes to the Mg(2+) binding site. Histidine 280 serves as the catalytic Tele-phosphohistidine intermediate. 299–309 serves as a coordination point for CoA; sequence MREAGIYVPET. Serine 359 is modified (phosphoserine).

The protein belongs to the succinate/malate CoA ligase alpha subunit family. Composed of two subunits.

It localises to the cytoplasm. The catalysed reaction is oxaloacetate + acetyl-CoA + ADP + phosphate = citrate + ATP + CoA. Its function is as follows. Catalyzes the formation of cytosolic acetyl-CoA, which is mainly used for the biosynthesis of fatty acids and sterols. In Schizosaccharomyces pombe (strain 972 / ATCC 24843) (Fission yeast), this protein is Probable ATP-citrate synthase subunit 1.